Here is a 228-residue protein sequence, read N- to C-terminus: UPF0758 protein CLI_3057 (228 aa).

Residues 106 to 228 (KINTPLDVSN…YVSMKEKGTI (123 aa)) form the MPN domain. 3 residues coordinate Zn(2+): His-177, His-179, and Asp-190. The JAMM motif motif lies at 177 to 190 (HNHPSGDPTPSKED).

Belongs to the UPF0758 family.

This Clostridium botulinum (strain Langeland / NCTC 10281 / Type F) protein is UPF0758 protein CLI_3057.